The primary structure comprises 271 residues: Phosphate import ATP-binding protein PstB (271 aa).

The region spanning 13–266 (VRTAPVSEAE…PKHPYTEAYI (254 aa)) is the ABC transporter domain. 57–64 (GPSGCGKS) serves as a coordination point for ATP.

This sequence belongs to the ABC transporter superfamily. Phosphate importer (TC 3.A.1.7) family. The complex is composed of two ATP-binding proteins (PstB), two transmembrane proteins (PstC and PstA) and a solute-binding protein (PstS).

It is found in the cell inner membrane. It carries out the reaction phosphate(out) + ATP + H2O = ADP + 2 phosphate(in) + H(+). Its function is as follows. Part of the ABC transporter complex PstSACB involved in phosphate import. Responsible for energy coupling to the transport system. The sequence is that of Phosphate import ATP-binding protein PstB from Thermus thermophilus (strain ATCC 27634 / DSM 579 / HB8).